The sequence spans 310 residues: Acetyl-coenzyme A carboxylase carboxyl transferase subunit alpha (310 aa).

The 251-residue stretch at 36 to 286 (NLEKEITKTY…GEYILKQLDE (251 aa)) folds into the CoA carboxyltransferase C-terminal domain.

The protein belongs to the AccA family. In terms of assembly, acetyl-CoA carboxylase is a heterohexamer composed of biotin carboxyl carrier protein (AccB), biotin carboxylase (AccC) and two subunits each of ACCase subunit alpha (AccA) and ACCase subunit beta (AccD).

It is found in the cytoplasm. It catalyses the reaction N(6)-carboxybiotinyl-L-lysyl-[protein] + acetyl-CoA = N(6)-biotinyl-L-lysyl-[protein] + malonyl-CoA. It functions in the pathway lipid metabolism; malonyl-CoA biosynthesis; malonyl-CoA from acetyl-CoA: step 1/1. In terms of biological role, component of the acetyl coenzyme A carboxylase (ACC) complex. First, biotin carboxylase catalyzes the carboxylation of biotin on its carrier protein (BCCP) and then the CO(2) group is transferred by the carboxyltransferase to acetyl-CoA to form malonyl-CoA. This Campylobacter fetus subsp. fetus (strain 82-40) protein is Acetyl-coenzyme A carboxylase carboxyl transferase subunit alpha.